The chain runs to 171 residues: MEARLSTGEKTKKMATTSRPSSPLPPEEETAAETTTSEEEEQQQMERFYALVANVRALRAMFKEAALPSCREDDVSGGGGGEQRQKRPRAAPWRPAFEMAVFECGGGGGTTTDDIEAATTKGQDGNCKKGKRSEANAAAEEDKGEVIEGKPVAIAIVADGPGKSTTMPDSN.

Residues 1–12 (MEARLSTGEKTK) show a composition bias toward basic and acidic residues. Disordered regions lie at residues 1-45 (MEAR…QQQM), 65-94 (AALPSCREDDVSGGGGGEQRQKRPRAAPWR), and 119-143 (TTKGQDGNCKKGKRSEANAAAEEDK). The segment covering 26–43 (PEEETAAETTTSEEEEQQ) has biased composition (acidic residues).

The protein belongs to the NPR1-interactor family. As to quaternary structure, interacts with NPR1/NH1. Interacts with NPR3/NH3.

It is found in the nucleus. Binds to and weakly represses NPR1/NH1-mediated transcriptional activation of LG2 in vitro. The chain is NRR repressor homolog 2 from Oryza sativa subsp. japonica (Rice).